Here is a 569-residue protein sequence, read N- to C-terminus: Dolichol kinase EVAN (569 aa).

At methionine 1–arginine 22 the chain is on the cytoplasmic side. Residues isoleucine 23 to leucine 43 form a helical membrane-spanning segment. The Lumenal segment spans residues serine 44–glycine 67. The chain crosses the membrane as a helical span at residues alanine 68–valine 88. The Cytoplasmic segment spans residues glutamine 89 to threonine 108. A helical membrane pass occupies residues methionine 109 to methionine 129. Residues serine 130 to arginine 147 are Lumenal-facing. A helical membrane pass occupies residues valine 148 to serine 168. At histidine 169–methionine 178 the chain is on the cytoplasmic side. A helical membrane pass occupies residues leucine 179–phenylalanine 199. Topologically, residues proline 200 to glutamate 207 are lumenal. The chain crosses the membrane as a helical span at residues alanine 208–alanine 228. The Cytoplasmic segment spans residues lysine 229–glycine 252. The chain crosses the membrane as a helical span at residues isoleucine 253–leucine 273. At histidine 274–serine 296 the chain is on the lumenal side. Asparagine 289 carries an N-linked (GlcNAc...) asparagine glycan. Residues valine 297–phenylalanine 317 form a helical membrane-spanning segment. At valine 318 to arginine 340 the chain is on the cytoplasmic side. A helical membrane pass occupies residues leucine 341 to isoleucine 361. Residues serine 362 to arginine 369 lie on the Lumenal side of the membrane. The helical transmembrane segment at isoleucine 370–leucine 390 threads the bilayer. The Cytoplasmic segment spans residues glutamine 391–lysine 393. The helical transmembrane segment at phenylalanine 394–isoleucine 414 threads the bilayer. Topologically, residues tryptophan 415–leucine 440 are lumenal. Residues isoleucine 441 to phenylalanine 461 traverse the membrane as a helical segment. The Cytoplasmic segment spans residues asparagine 462–arginine 464. The helical transmembrane segment at alanine 465 to valine 485 threads the bilayer. Residues glycine 486–glycine 508 are Lumenal-facing. Residues histidine 487–glutamate 503 form a CTP-binding region. The chain crosses the membrane as a helical span at residues isoleucine 509–isoleucine 529. The Cytoplasmic segment spans residues leucine 530–glutamate 548. Residues alanine 549–leucine 569 traverse the membrane as a helical segment.

The protein belongs to the polyprenol kinase family.

The protein resides in the endoplasmic reticulum membrane. The enzyme catalyses a di-trans,poly-cis-dolichol + CTP = a di-trans,poly-cis-dolichyl phosphate + CDP + H(+). In terms of biological role, essential for pollen development. Involved in protein N-glycosylation in the endoplasmic reticulum (ER), especially in the female gametophyte. Mediates pollen tube (PT) reception in synergids through protein glycosylation. The polypeptide is Dolichol kinase EVAN (Arabidopsis thaliana (Mouse-ear cress)).